The sequence spans 835 residues: MYSFFNTLTVTKIISRLILSIGLIFGIFTYGFSQQHYFNSEALENPAEHNEAFNKIISTGTSLAVSGNASNITRSMVNDAANQEVKHWLNRFGTTQVNVNFDKKFSLKESSLDWLLPWYDSASYVFFSQLGIRNKDSRNTLNIGAGVRTFQQSWMYGFNTSYDNDMTGHNHRIGVGAEAWTDYLQLSANGYFRLNGWHQSRDFADYNERPASGGDIHVKAYLPALPQLGGKLKYEQYRGERVALFGKDNLQSNPYAVTTGLIYTPIPFITLGVDQRMGKSRQHEIQWNLQMDYRLGESFRSQFSPAVVAGTRLLAESRYNLVERNPNIVLEYQKQNTIKLAFSPAVLSGLPGQVYSVSAQIQSQSALQRILWNDAQWVAAGGKLIPVSATDYNVVLPPYKPMAPASRTVGKTGESEAAVNTYTLSATAIDNHGNSSNPATLTVIVQQPQFVITSEVTDDGALADGRTPITVKFTVTNIDSTPVAEQEGVITTSNGALPSKVTKKTDAQGVISIALTSFTVGVSVVTLDIQGQQATVDVRFAVLPPDVTNSSFNVSPSDIVADGSMQSILTFVPRNKNNEFVSGITDLEFIQSGVPVTISPVTENADNYTASVVGNSVGDVDITPQVGGESLDLLQKRITLYPVPKITGINVNGEQFATDKGFPKTTFNKATFQLVMNDDVANNTQYDWTSSYAASAPVDNQGKVNIAYKTYGSTVTVTAKSKKFPSYTATYQFKPNLWVFSGTMSLQSSVEASRNCQRTDFTALIESARASNGSRSPDGTLWGEWGSLATYDSAEWPSGNYWTKKTSTDFVTMDMTTGDIPTSAATAYPLCAEPQ.

The Big-1 domain maps to 451 to 541; it reads VITSEVTDDG…QQATVDVRFA (91 aa).

Belongs to the intimin/invasin family.

The protein localises to the cell outer membrane. Functionally, invasin is a protein that allows enteric bacteria to penetrate cultured mammalian cells. The entry of invasin in the cell is mediated by binding several beta-1 chain integrins. This Yersinia enterocolitica protein is Invasin.